Reading from the N-terminus, the 520-residue chain is Bifunctional dihydrofolate reductase-thymidylate synthase (520 aa).

A DHFR domain is found at 26-229 (AFSIVVALDM…LEFEICKYVP (204 aa)). Position 30 (V30) interacts with substrate. Residues A32 and 38–44 (GIGDGES) contribute to the NADP(+) site. Residue D52 participates in substrate binding. NADP(+) is bound by residues 81–83 (RKT), 102–105 (LSSK), and 157–164 (GGAQVYAD). Substrate is bound by residues Y162 and T180. The thymidylate synthase stretch occupies residues 234 to 520 (ERQYLELIDR…HPAIKMEMAV (287 aa)). Position 254 (R254) interacts with dUMP. The active site involves C400. DUMP contacts are provided by residues H401, 421–425 (QRSCD), N433, and 463–465 (HVY).

It in the N-terminal section; belongs to the dihydrofolate reductase family. In the C-terminal section; belongs to the thymidylate synthase family.

The enzyme catalyses (6S)-5,6,7,8-tetrahydrofolate + NADP(+) = 7,8-dihydrofolate + NADPH + H(+). It catalyses the reaction dUMP + (6R)-5,10-methylene-5,6,7,8-tetrahydrofolate = 7,8-dihydrofolate + dTMP. Its pathway is cofactor biosynthesis; tetrahydrofolate biosynthesis; 5,6,7,8-tetrahydrofolate from 7,8-dihydrofolate: step 1/1. Functionally, bifunctional enzyme. Involved in de novo dTMP biosynthesis. Key enzyme in folate metabolism. Catalyzes an essential reaction for de novo glycine and purine synthesis, DNA precursor synthesis, and for the conversion of dUMP to dTMP. The protein is Bifunctional dihydrofolate reductase-thymidylate synthase of Leishmania major.